Reading from the N-terminus, the 500-residue chain is UDP-GalNAc:beta-1,3-N-acetylgalactosaminyltransferase 2 (500 aa).

The Cytoplasmic portion of the chain corresponds to Met1–Val6. Residues Leu7–Leu23 traverse the membrane as a helical; Signal-anchor for type II membrane protein segment. Over Arg24 to Arg500 the chain is Lumenal. Residues Asn116 and Asn174 are each glycosylated (N-linked (GlcNAc...) asparagine).

This sequence belongs to the glycosyltransferase 31 family. N-glycosylated. In terms of tissue distribution, expressed in all tissues examined, but at highest levels in testis, adipose tissue, skeletal muscle and ovary.

The protein resides in the golgi apparatus membrane. It localises to the endoplasmic reticulum. It catalyses the reaction 3-O-(N-acetyl-beta-D-glucosaminyl-(1-&gt;4)-alpha-D-mannosyl)-L-threonyl-[protein] + UDP-N-acetyl-alpha-D-galactosamine = 3-O-[beta-D-GalNAc-(1-&gt;3)-beta-D-GlcNAc-(1-&gt;4)-alpha-D-Man]-L-Thr-[protein] + UDP + H(+). Its pathway is protein modification; protein glycosylation. Beta-1,3-N-acetylgalactosaminyltransferase that synthesizes a unique carbohydrate structure, GalNAc-beta-1-3GlcNAc, on N- and O-glycans. Has no galactose nor galactosaminyl transferase activity toward any acceptor substrate. Involved in alpha-dystroglycan (DAG1) glycosylation: acts coordinately with GTDC2/POMGnT2 to synthesize a GalNAc-beta3-GlcNAc-beta-terminus at the 4-position of protein O-mannose in the biosynthesis of the phosphorylated O-mannosyl trisaccharide (N-acetylgalactosamine-beta-3-N-acetylglucosamine-beta-4-(phosphate-6-)mannose), a carbohydrate structure present in alpha-dystroglycan, which is required for binding laminin G-like domain-containing extracellular proteins with high affinity. The polypeptide is UDP-GalNAc:beta-1,3-N-acetylgalactosaminyltransferase 2 (B3GALNT2) (Homo sapiens (Human)).